The chain runs to 309 residues: Malate dehydrogenase (309 aa).

Residues 10–15 (GAGNVG) and aspartate 34 contribute to the NAD(+) site. Positions 83 and 89 each coordinate substrate. NAD(+) is bound by residues asparagine 96 and 119–121 (VSN). Residues asparagine 121 and arginine 152 each contribute to the substrate site. The Proton acceptor role is filled by histidine 176.

This sequence belongs to the LDH/MDH superfamily. MDH type 3 family.

It catalyses the reaction (S)-malate + NAD(+) = oxaloacetate + NADH + H(+). In terms of biological role, catalyzes the reversible oxidation of malate to oxaloacetate. This chain is Malate dehydrogenase, found in Heliobacterium modesticaldum (strain ATCC 51547 / Ice1).